Reading from the N-terminus, the 280-residue chain is Phosphatidylglycerol--prolipoprotein diacylglyceryl transferase (280 aa).

Transmembrane regions (helical) follow at residues 23-43 (LRWY…LAGV), 58-78 (LLFW…VLFY), 93-113 (IWTG…ALWW), and 120-140 (CTFL…LGAG). R141 contributes to the a 1,2-diacyl-sn-glycero-3-phospho-(1'-sn-glycerol) binding site. Helical transmembrane passes span 173–193 (PSQL…LWLY), 200–220 (IGAV…FVEF), and 241–261 (QGQI…VWAV).

This sequence belongs to the Lgt family.

Its subcellular location is the cell inner membrane. It carries out the reaction L-cysteinyl-[prolipoprotein] + a 1,2-diacyl-sn-glycero-3-phospho-(1'-sn-glycerol) = an S-1,2-diacyl-sn-glyceryl-L-cysteinyl-[prolipoprotein] + sn-glycerol 1-phosphate + H(+). Its pathway is protein modification; lipoprotein biosynthesis (diacylglyceryl transfer). Functionally, catalyzes the transfer of the diacylglyceryl group from phosphatidylglycerol to the sulfhydryl group of the N-terminal cysteine of a prolipoprotein, the first step in the formation of mature lipoproteins. The protein is Phosphatidylglycerol--prolipoprotein diacylglyceryl transferase of Pseudoalteromonas atlantica (strain T6c / ATCC BAA-1087).